The chain runs to 540 residues: Mitochondrial distribution and morphology protein 34 (540 aa).

The region spanning 1–208 is the SMP-LTD domain; that stretch reads MSFKFNSGTF…LPSVIFNMSQ (208 aa). 2 disordered regions span residues 26–51 and 379–399; these read ALNP…KKPK and RSKS…SGSL. Polar residues predominate over residues 35–44; that stretch reads PESTSGQDGS.

Belongs to the MDM34 family. Component of the ER-mitochondria encounter structure (ERMES) or MDM complex, composed of MMM1, MDM10, MDM12 and MDM34.

Its subcellular location is the mitochondrion outer membrane. Functionally, component of the ERMES/MDM complex, which serves as a molecular tether to connect the endoplasmic reticulum (ER) and mitochondria. Components of this complex are involved in the control of mitochondrial shape and protein biogenesis, and function in nonvesicular lipid trafficking between the ER and mitochondria. MDM34 is required for the interaction of the ER-resident membrane protein MMM1 and the outer mitochondrial membrane-resident beta-barrel protein MDM10. The chain is Mitochondrial distribution and morphology protein 34 from Kluyveromyces lactis (strain ATCC 8585 / CBS 2359 / DSM 70799 / NBRC 1267 / NRRL Y-1140 / WM37) (Yeast).